We begin with the raw amino-acid sequence, 221 residues long: Phosphoribosylformylglycinamidine synthase subunit PurQ (221 aa).

In terms of domain architecture, Glutamine amidotransferase type-1 spans 6–221 (VGVVVFPGSN…LFTLKSLILK (216 aa)). Cysteine 89 serves as the catalytic Nucleophile. Residues histidine 197 and glutamate 199 contribute to the active site.

As to quaternary structure, part of the FGAM synthase complex composed of 1 PurL, 1 PurQ and 2 PurS subunits.

The protein resides in the cytoplasm. The catalysed reaction is N(2)-formyl-N(1)-(5-phospho-beta-D-ribosyl)glycinamide + L-glutamine + ATP + H2O = 2-formamido-N(1)-(5-O-phospho-beta-D-ribosyl)acetamidine + L-glutamate + ADP + phosphate + H(+). It carries out the reaction L-glutamine + H2O = L-glutamate + NH4(+). It functions in the pathway purine metabolism; IMP biosynthesis via de novo pathway; 5-amino-1-(5-phospho-D-ribosyl)imidazole from N(2)-formyl-N(1)-(5-phospho-D-ribosyl)glycinamide: step 1/2. Functionally, part of the phosphoribosylformylglycinamidine synthase complex involved in the purines biosynthetic pathway. Catalyzes the ATP-dependent conversion of formylglycinamide ribonucleotide (FGAR) and glutamine to yield formylglycinamidine ribonucleotide (FGAM) and glutamate. The FGAM synthase complex is composed of three subunits. PurQ produces an ammonia molecule by converting glutamine to glutamate. PurL transfers the ammonia molecule to FGAR to form FGAM in an ATP-dependent manner. PurS interacts with PurQ and PurL and is thought to assist in the transfer of the ammonia molecule from PurQ to PurL. This is Phosphoribosylformylglycinamidine synthase subunit PurQ from Prochlorococcus marinus (strain MIT 9312).